A 141-amino-acid chain; its full sequence is Hemoglobin subunit alpha (141 aa).

A Globin domain is found at valine 1–arginine 141. Position 3 is a phosphoserine (serine 3). Position 7 is an N6-succinyllysine (lysine 7). Phosphothreonine is present on threonine 8. N6-succinyllysine is present on lysine 11. Residue lysine 16 is modified to N6-acetyllysine; alternate. Lysine 16 carries the N6-succinyllysine; alternate modification. At tyrosine 24 the chain carries Phosphotyrosine. Position 35 is a phosphoserine (serine 35). An N6-succinyllysine modification is found at lysine 40. Serine 49 is modified (phosphoserine). Histidine 58 is a binding site for O2. Histidine 87 lines the heme b pocket. At serine 102 the chain carries Phosphoserine. A Phosphothreonine modification is found at threonine 108. Residues serine 124 and serine 131 each carry the phosphoserine modification. 2 positions are modified to phosphothreonine: threonine 134 and threonine 137. Residue serine 138 is modified to Phosphoserine.

It belongs to the globin family. Heterotetramer of two alpha chains and two beta chains. As to expression, red blood cells.

In terms of biological role, involved in oxygen transport from the lung to the various peripheral tissues. Its function is as follows. Hemopressin acts as an antagonist peptide of the cannabinoid receptor CNR1. Hemopressin-binding efficiently blocks cannabinoid receptor CNR1 and subsequent signaling. The polypeptide is Hemoglobin subunit alpha (HBA) (Semnopithecus entellus (Northern plains gray langur)).